Reading from the N-terminus, the 475-residue chain is Probable proline--tRNA ligase, mitochondrial (475 aa).

The transit peptide at 1–29 (MEGLLTRCRTLSALATCSLRHSRCIVRKC) directs the protein to the mitochondrion.

The protein belongs to the class-II aminoacyl-tRNA synthetase family.

The protein resides in the mitochondrion matrix. The catalysed reaction is tRNA(Pro) + L-proline + ATP = L-prolyl-tRNA(Pro) + AMP + diphosphate. Mitochondrial aminoacyl-tRNA synthetase that catalyzes the specific attachment of the proline amino acid (aa) to the homologous transfer RNA (tRNA), further participating in protein synthesis. The reaction occurs in a two steps: proline is first activated by ATP to form Pro-AMP and then transferred to the acceptor end of tRNA(Pro). This Rattus norvegicus (Rat) protein is Probable proline--tRNA ligase, mitochondrial (Pars2).